The primary structure comprises 497 residues: Glycerol kinase (497 aa).

Residue threonine 12 coordinates ADP. ATP-binding residues include threonine 12, threonine 13, and serine 14. Threonine 12 is a sn-glycerol 3-phosphate binding site. Position 16 (arginine 16) interacts with ADP. Residues arginine 82, glutamate 83, tyrosine 132, and aspartate 239 each contribute to the sn-glycerol 3-phosphate site. Residues arginine 82, glutamate 83, tyrosine 132, aspartate 239, and glutamine 240 each coordinate glycerol. ADP is bound by residues threonine 261 and glycine 303. ATP-binding residues include threonine 261, glycine 303, glutamine 307, and glycine 402. ADP is bound by residues glycine 402 and asparagine 406.

It belongs to the FGGY kinase family. In terms of assembly, homodimer.

It carries out the reaction glycerol + ATP = sn-glycerol 3-phosphate + ADP + H(+). Its pathway is polyol metabolism; glycerol degradation via glycerol kinase pathway; sn-glycerol 3-phosphate from glycerol: step 1/1. Key enzyme in the regulation of glycerol uptake and metabolism. Catalyzes the phosphorylation of glycerol to yield sn-glycerol 3-phosphate. Can utilize other nucleoside triphosphates (GTP, CTP, UTP and ITP) as a phosphoryl donor. The protein is Glycerol kinase of Thermococcus kodakarensis (strain ATCC BAA-918 / JCM 12380 / KOD1) (Pyrococcus kodakaraensis (strain KOD1)).